The chain runs to 434 residues: Beta-enolase (434 aa).

An N-acetylalanine modification is found at alanine 2. Phosphothreonine is present on threonine 72. Serine 83 and serine 157 each carry phosphoserine. 2 residues coordinate substrate: histidine 158 and glutamate 167. Residue serine 176 is modified to Phosphoserine. Threonine 205 carries the post-translational modification Phosphothreonine. The active-site Proton donor is the glutamate 210. Phosphothreonine is present on threonine 229. At tyrosine 236 the chain carries Phosphotyrosine. Residue aspartate 245 participates in Mg(2+) binding. At serine 263 the chain carries Phosphoserine. Substrate is bound by residues glutamate 293 and aspartate 318. Residues glutamate 293 and aspartate 318 each contribute to the Mg(2+) site. Residue lysine 343 is the Proton acceptor of the active site. Substrate-binding positions include 370 to 373 and lysine 394; that span reads SHRS.

Belongs to the enolase family. Mammalian enolase is composed of 3 isozyme subunits, alpha, beta and gamma, which can form homodimers or heterodimers which are cell-type and development-specific. Interacts with PNKD. Mg(2+) is required as a cofactor. In terms of tissue distribution, the alpha/alpha homodimer is expressed in embryo and in most adult tissues. The alpha/beta heterodimer and the beta/beta homodimer are found in striated muscle, and the alpha/gamma heterodimer and the gamma/gamma homodimer in neurons.

Its subcellular location is the cytoplasm. The enzyme catalyses (2R)-2-phosphoglycerate = phosphoenolpyruvate + H2O. It functions in the pathway carbohydrate degradation; glycolysis; pyruvate from D-glyceraldehyde 3-phosphate: step 4/5. In terms of biological role, glycolytic enzyme that catalyzes the conversion of 2-phosphoglycerate to phosphoenolpyruvate. Appears to have a function in striated muscle development and regeneration. The polypeptide is Beta-enolase (Eno3) (Rattus norvegicus (Rat)).